A 131-amino-acid polypeptide reads, in one-letter code: SPbeta prophage-derived uncharacterized protein YoqY (131 aa).

This Bacillus subtilis (strain 168) protein is SPbeta prophage-derived uncharacterized protein YoqY (yoqY).